The sequence spans 89 residues: Small ribosomal subunit protein bS20 (89 aa).

Basic residues predominate over residues 1-10; sequence MKNRSAIKRH. Residues 1-30 form a disordered region; sequence MKNRSAIKRHNQSEVRRMRNRSAKSEVRTT. The segment covering 11–30 has biased composition (basic and acidic residues); the sequence is NQSEVRRMRNRSAKSEVRTT.

The protein belongs to the bacterial ribosomal protein bS20 family.

Its function is as follows. Binds directly to 16S ribosomal RNA. The sequence is that of Small ribosomal subunit protein bS20 from Treponema denticola (strain ATCC 35405 / DSM 14222 / CIP 103919 / JCM 8153 / KCTC 15104).